We begin with the raw amino-acid sequence, 86 residues long: Small ribosomal subunit protein bS20 (86 aa).

Residues 1-25 (MANIKSQMKRIRTNEAARKRNQSVK) are disordered.

This sequence belongs to the bacterial ribosomal protein bS20 family.

In terms of biological role, binds directly to 16S ribosomal RNA. The polypeptide is Small ribosomal subunit protein bS20 (Nocardia farcinica (strain IFM 10152)).